Here is a 533-residue protein sequence, read N- to C-terminus: Retinoid isomerohydrolase (533 aa).

Residue serine 2 is modified to N-acetylserine. Threonine 101 and threonine 105 each carry phosphothreonine. Cysteine 112 carries the S-palmitoyl cysteine; in membrane form lipid modification. Lysine 113 is modified (N6-acetyllysine). Residue serine 117 is modified to Phosphoserine. A Fe cation-binding site is contributed by histidine 180. Cysteine 231 is lipidated: S-palmitoyl cysteine; in membrane form. Residues histidine 241 and histidine 313 each coordinate Fe cation. Residues cysteine 329 and cysteine 330 are each lipidated (S-palmitoyl cysteine; in membrane form). Histidine 527 lines the Fe cation pocket.

This sequence belongs to the carotenoid oxygenase family. Interacts with MYO7A; this mediates light-dependent intracellular transport of RPE65. Fe(2+) serves as cofactor. In terms of processing, palmitoylation by LRAT regulates ligand binding specificity; the palmitoylated form (membrane form) specifically binds all-trans-retinyl-palmitate, while the soluble unpalmitoylated form binds all-trans-retinol (vitamin A). As to expression, retinal pigment epithelium specific.

The protein localises to the cytoplasm. Its subcellular location is the cell membrane. It is found in the microsome membrane. It carries out the reaction an all-trans-retinyl ester + H2O = 11-cis-retinol + a fatty acid + H(+). The enzyme catalyses lutein = (3R,3'S)-zeaxanthin. It catalyses the reaction all-trans-retinyl hexadecanoate + H2O = 11-cis-retinol + hexadecanoate + H(+). Critical isomerohydrolase in the retinoid cycle involved in regeneration of 11-cis-retinal, the chromophore of rod and cone opsins. Catalyzes the cleavage and isomerization of all-trans-retinyl fatty acid esters to 11-cis-retinol which is further oxidized by 11-cis retinol dehydrogenase to 11-cis-retinal for use as visual chromophore. Essential for the production of 11-cis retinal for both rod and cone photoreceptors. Also capable of catalyzing the isomerization of lutein to meso-zeaxanthin an eye-specific carotenoid. The soluble form binds vitamin A (all-trans-retinol), making it available for LRAT processing to all-trans-retinyl ester. The membrane form, palmitoylated by LRAT, binds all-trans-retinyl esters, making them available for IMH (isomerohydrolase) processing to all-cis-retinol. The soluble form is regenerated by transferring its palmitoyl groups onto 11-cis-retinol, a reaction catalyzed by LRAT. This is Retinoid isomerohydrolase (RPE65) from Canis lupus familiaris (Dog).